The chain runs to 736 residues: Fidgetin (736 aa).

Disordered regions lie at residues 118–155 (GMTP…CGNH), 180–248 (TYSG…YSPG), 272–295 (IPGY…GSSA), and 341–438 (STRG…AEEQ). The span at 128 to 150 (VTASVGSSTGVASSLSEPSYSSS) shows a compositional bias: low complexity. Pro residues predominate over residues 205–214 (QPPPPPPPTL). Residues 216–232 (PSYNTSSPNLSSYNYPP) are compositionally biased toward low complexity. Over residues 352–368 (DTSSLAFKPTKQSMPTD) the composition is skewed to polar residues. ATP contacts are provided by residues Ala-467 and 507-512 (GTGRTL).

This sequence belongs to the AAA ATPase family.

It is found in the nucleus matrix. Its subcellular location is the cytoplasm. The protein resides in the cytoskeleton. The protein localises to the microtubule organizing center. It localises to the centrosome. ATP-dependent microtubule severing protein. Severs microtubules along their length and depolymerizes their ends, primarily the minus-end, suppressing microtubule growth from and attachment to centrosomes. Microtubule severing may promote rapid reorganization of cellular microtubule arrays and the release of microtubules from the centrosome following nucleation. Microtubule release from the mitotic spindle poles may allow depolymerization of the microtubule end proximal to the spindle pole, leading to poleward microtubule flux and poleward motion of chromosome. The protein is Fidgetin (fign) of Danio rerio (Zebrafish).